The following is a 117-amino-acid chain: Transcription elongation factor A protein-like 8 (117 aa).

Basic and acidic residues-rich tracts occupy residues 1 to 24 (MQKS…DRPL) and 61 to 74 (YKED…DPEE). The tract at residues 1–74 (MQKSCGENER…SPVRHLDPEE (74 aa)) is disordered. The stretch at 73–100 (EEMIRGADELERLREEIRRVRNKFVMMH) forms a coiled coil.

The protein belongs to the TFS-II family. TFA subfamily.

The protein resides in the nucleus. Functionally, may be involved in transcriptional regulation. The chain is Transcription elongation factor A protein-like 8 (TCEAL8) from Bos taurus (Bovine).